Here is a 202-residue protein sequence, read N- to C-terminus: MGKSELSGRLNWQALAGLKASGAEQNLYNVFNAVFEGTKYVLYEKPKHLKNLYAQVVLPDDVIKEIFNPLIDLSTTQWGVSPDFAIENTETHKILFGEIKRQDGWVEGKDPSAGRGNAHERSCKLFTPGLLKAYRTIGGINDEEILPFWVVFEGDITRDPKRVREITFWYDHYQDNYFMWRPNESGEKLVQHFNEKLKKYLD.

As to quaternary structure, homodimer.

The enzyme catalyses Endonucleolytic cleavage of DNA to give specific double-stranded fragments with terminal 5'-phosphates.. A P subtype restriction enzyme that recognizes the double-stranded sequence 5'-CAATTG-3' and cleaves after C-1. The sequence is that of Type II restriction enzyme MunI from Mycoplasma sp.